Reading from the N-terminus, the 218-residue chain is MGQKINPLGFRLGTTQSHHSLWFAQPKKYSEGLEEDKKIRDCIKNYVQKNIRISSGMEGIARIEIQKRIDLIQIIIYMGFPKLLIEDKPRRVEELQMNVQKELNCVNRKLNIAITRISNPYGDPNILAEFIAGQLKNRVSFRKAMKKAIELTEQANTKGIQVQIAGRIDGKEIARVEWIREGRVPLQTIEAKIDYCSYTVRTIYGVLGIKIWIFVDEE.

A KH type-2 domain is found at 47-118; the sequence is VQKNIRISSG…KLNIAITRIS (72 aa).

It belongs to the universal ribosomal protein uS3 family. In terms of assembly, part of the 30S ribosomal subunit.

It is found in the plastid. Its subcellular location is the chloroplast. The protein is Small ribosomal subunit protein uS3c (rps3) of Nasturtium officinale (Watercress).